A 450-amino-acid chain; its full sequence is Chromosomal replication initiator protein DnaA (450 aa).

Residues 1-79 are domain I, interacts with DnaA modulators; sequence MENIHDLWNR…TGEELLIKFI (79 aa). The segment at 79 to 111 is domain II; the sequence is ITPPNQSEDDFEFQRSSKKHRKPYEESTDFPQS. The interval 112-328 is domain III, AAA+ region; it reads MLNPKYTFDT…GALIRVVAYS (217 aa). Residues glycine 156, glycine 158, lysine 159, and threonine 160 each contribute to the ATP site. The tract at residues 329 to 450 is domain IV, binds dsDNA; sequence SLINKEITAD…KEIEEKLKQL (122 aa).

This sequence belongs to the DnaA family. In terms of assembly, oligomerizes as a right-handed, spiral filament on DNA at oriC.

It localises to the cytoplasm. In terms of biological role, plays an essential role in the initiation and regulation of chromosomal replication. ATP-DnaA binds to the origin of replication (oriC) to initiate formation of the DNA replication initiation complex once per cell cycle. Binds the DnaA box (a 9 base pair repeat at the origin) and separates the double-stranded (ds)DNA. Forms a right-handed helical filament on oriC DNA; dsDNA binds to the exterior of the filament while single-stranded (ss)DNA is stabiized in the filament's interior. The ATP-DnaA-oriC complex binds and stabilizes one strand of the AT-rich DNA unwinding element (DUE), permitting loading of DNA polymerase. After initiation quickly degrades to an ADP-DnaA complex that is not apt for DNA replication. Binds acidic phospholipids. The polypeptide is Chromosomal replication initiator protein DnaA (Geobacillus sp. (strain WCH70)).